Reading from the N-terminus, the 545-residue chain is MMGHRPVLVLSQNTKRESGRKVQSGNINAAKTIADIIRTCLGPKSMMKMLLDPMGGIVMTNDGNAILREIQVQHPAAKSMIEISRTQDEEVGGGTTSVIILAGEMLSVAEHFLEQQMHPTVVISAYRKALDDMISTLKKISIPVDINDSDMMLNIINSSITTKAISRWSSLACNIALDAVKTVQFEENGRKEIDIKKYAKVEKIPGGIIEDSCVLRGVMINKDVTHPRMRRYIKNPRIVLLDSSLEYKKGESQTDIEITREEDFTRILQMEEEYIQQLCEDIIQLKPDVVITEKGISDLAQHYLMRANITAIRRVRKTDNNRIARACGARIVSRPEELREDDVGTGAGLLEIKKIGDEYFTFITECKDPKACTILLRGASKEILSEVERNLQDAMQVCRNVLLDPQLVPGGGASEMAVAHALTEKSKAMTGVEQWPYRAVAQALEVIPRTLIQNCGASTIRLLTSLRAKHTQENCETWGVNGETGTLVDVKELGIWEPLAVKLQTYKTAVETAVLLLRIDDIVSGHKKKGDDQSRQGGAPDAGQE.

At methionine 1 the chain carries N-acetylmethionine. Residues 1-24 (MMGHRPVLVLSQNTKRESGRKVQS) are disordered. Residue serine 11 is modified to Phosphoserine. A Glycyl lysine isopeptide (Lys-Gly) (interchain with G-Cter in SUMO2) cross-link involves residue lysine 15. Positions 42, 94, 95, 96, 97, 162, and 163 each coordinate ADP. ATP-binding residues include glycine 42, glycine 94, threonine 95, and threonine 96. Serine 170 is modified (phosphoserine). Lysine 222 carries the post-translational modification N6-acetyllysine. Phosphoserine is present on residues serine 243 and serine 244. A Phosphotyrosine modification is found at tyrosine 247. Residues lysine 248 and lysine 249 each participate in a glycyl lysine isopeptide (Lys-Gly) (interchain with G-Cter in SUMO2) cross-link. Position 252 is a phosphoserine (serine 252). Cysteine 366 and cysteine 372 are oxidised to a cystine. A Glycyl lysine isopeptide (Lys-Gly) (interchain with G-Cter in SUMO2) cross-link involves residue lysine 381. Glycine 411 serves as a coordination point for ADP. Glycine 411 serves as a coordination point for ATP. Threonine 430 and threonine 459 each carry phosphothreonine. 4 residues coordinate ADP: glycine 482, glutamate 483, glutamate 497, and lysine 502. Glycine 482 is an ATP binding site. Glutamate 497 lines the ATP pocket. Residues 526–545 (HKKKGDDQSRQGGAPDAGQE) form a disordered region.

It belongs to the TCP-1 chaperonin family. Component of the chaperonin-containing T-complex (TRiC), a hexadecamer composed of two identical back-to-back stacked rings enclosing a protein folding chamber. Each ring is made up of eight different subunits: TCP1/CCT1, CCT2, CCT3, CCT4, CCT5, CCT6A/CCT6, CCT7, CCT8. Interacts with PACRG. Interacts with DNAAF4. Interacts with DLEC1.

The protein localises to the cytoplasm. The catalysed reaction is ATP + H2O = ADP + phosphate + H(+). Component of the chaperonin-containing T-complex (TRiC), a molecular chaperone complex that assists the folding of actin, tubulin and other proteins upon ATP hydrolysis. The TRiC complex mediates the folding of WRAP53/TCAB1, thereby regulating telomere maintenance. As part of the TRiC complex may play a role in the assembly of BBSome, a complex involved in ciliogenesis regulating transports vesicles to the cilia. This is T-complex protein 1 subunit gamma (CCT3) from Macaca fascicularis (Crab-eating macaque).